Here is a 75-residue protein sequence, read N- to C-terminus: Small ribosomal subunit protein bS16 (75 aa).

This sequence belongs to the bacterial ribosomal protein bS16 family.

The protein is Small ribosomal subunit protein bS16 of Helicobacter pylori (strain G27).